The sequence spans 125 residues: 14 kDa phosphohistidine phosphatase (125 aa).

Ala-2 carries the N-acetylalanine modification. Lys-21 lines the substrate pocket. His-53 acts as the Proton acceptor in catalysis. Residue 94–96 participates in substrate binding; it reads SMA.

This sequence belongs to the janus family. In terms of assembly, monomer. In terms of tissue distribution, expressed abundantly in heart and skeletal muscle.

The protein resides in the cytoplasm. The enzyme catalyses N(pros)-phospho-L-histidyl-[protein] + H2O = L-histidyl-[protein] + phosphate. It carries out the reaction N(tele)-phospho-L-histidyl-[protein] + H2O = L-histidyl-[protein] + phosphate. Functionally, exhibits phosphohistidine phosphatase activity. This chain is 14 kDa phosphohistidine phosphatase (PHPT1), found in Homo sapiens (Human).